The sequence spans 319 residues: Beta-ketoacyl-[acyl-carrier-protein] synthase III (319 aa).

Active-site residues include Cys113 and His246. Positions Gln247–Arg251 are ACP-binding. Residue Asn276 is part of the active site.

It belongs to the thiolase-like superfamily. FabH family. Homodimer.

It localises to the cytoplasm. The enzyme catalyses malonyl-[ACP] + acetyl-CoA + H(+) = 3-oxobutanoyl-[ACP] + CO2 + CoA. It participates in lipid metabolism; fatty acid biosynthesis. Catalyzes the condensation reaction of fatty acid synthesis by the addition to an acyl acceptor of two carbons from malonyl-ACP. Catalyzes the first condensation reaction which initiates fatty acid synthesis and may therefore play a role in governing the total rate of fatty acid production. Possesses both acetoacetyl-ACP synthase and acetyl transacylase activities. Its substrate specificity determines the biosynthesis of branched-chain and/or straight-chain of fatty acids. This Laribacter hongkongensis (strain HLHK9) protein is Beta-ketoacyl-[acyl-carrier-protein] synthase III.